A 464-amino-acid chain; its full sequence is NADH dehydrogenase [ubiquinone] flavoprotein 1, mitochondrial (464 aa).

The transit peptide at 1 to 20 directs the protein to the mitochondrion; sequence MLATRRLLGWSLPARVSVRF. K81 carries the post-translational modification N6-acetyllysine; alternate. K81 bears the N6-succinyllysine; alternate mark. 87 to 96 is an NADH binding site; the sequence is GRGGAGFPTG. K104 carries the post-translational modification N6-acetyllysine. Position 199–247 (199–247) interacts with FMN; sequence RGAGAYICGEETALIESIEGKQGKPRLKPPFPADVGVFGCPTTVANVET. The residue at position 257 (R257) is an Omega-N-methylarginine. An N6-acetyllysine modification is found at K375. [4Fe-4S] cluster is bound by residues C379, C382, C385, and C425.

This sequence belongs to the complex I 51 kDa subunit family. Core subunit of respiratory chain NADH dehydrogenase (Complex I) which is composed of 45 different subunits. This is a component of the flavoprotein-sulfur (FP) fragment of the enzyme. Interacts with RAB5IF. FMN serves as cofactor. It depends on [4Fe-4S] cluster as a cofactor.

It localises to the mitochondrion inner membrane. It carries out the reaction a ubiquinone + NADH + 5 H(+)(in) = a ubiquinol + NAD(+) + 4 H(+)(out). Functionally, core subunit of the mitochondrial membrane respiratory chain NADH dehydrogenase (Complex I) which catalyzes electron transfer from NADH through the respiratory chain, using ubiquinone as an electron acceptor. Part of the peripheral arm of the enzyme, where the electrons from NADH are accepted by flavin mononucleotide (FMN) and then passed along a chain of iron-sulfur clusters by electron tunnelling to the final acceptor ubiquinone. Contains FMN, which is the initial electron acceptor as well as one iron-sulfur cluster. This chain is NADH dehydrogenase [ubiquinone] flavoprotein 1, mitochondrial, found in Homo sapiens (Human).